The following is a 270-amino-acid chain: Putative pyruvate, phosphate dikinase regulatory protein (270 aa).

150–157 (GPSRTSKS) is a binding site for ADP.

It belongs to the pyruvate, phosphate/water dikinase regulatory protein family. PDRP subfamily.

It carries out the reaction N(tele)-phospho-L-histidyl/L-threonyl-[pyruvate, phosphate dikinase] + ADP = N(tele)-phospho-L-histidyl/O-phospho-L-threonyl-[pyruvate, phosphate dikinase] + AMP + H(+). The enzyme catalyses N(tele)-phospho-L-histidyl/O-phospho-L-threonyl-[pyruvate, phosphate dikinase] + phosphate + H(+) = N(tele)-phospho-L-histidyl/L-threonyl-[pyruvate, phosphate dikinase] + diphosphate. Bifunctional serine/threonine kinase and phosphorylase involved in the regulation of the pyruvate, phosphate dikinase (PPDK) by catalyzing its phosphorylation/dephosphorylation. The chain is Putative pyruvate, phosphate dikinase regulatory protein from Neorickettsia sennetsu (strain ATCC VR-367 / Miyayama) (Ehrlichia sennetsu).